We begin with the raw amino-acid sequence, 340 residues long: MSSDELVYMNWREIIMPEKVAVTTTSTYGKFVCEPLEKGYGITIGNSLRRIILSSLYGAAIVSVKFSEALHEYSVVSDVREDVSEIIMNLKEVKLKLDDPGDKILTINVKGEKFVTAADIISGDGRVEILNPEQHIATVSKGGELMMTMLVKTGKGYALAASNKDPEAPVGTIPIDSVFSPIKRVKYVVGASRIGQKTDYDKLTMEIWTDGSVTPEDSVAYAAKILKEQMNPFINFDEDIEPELVEKEHEGAAKNFNENLYRSVDELELSVRSSNCLKNAQILKIYQLVQKTDNEMLKTKNFGRKSLNEIKEVLTSMDLSLGMDLEGFEPPEEDQIKEGE.

Residues 1–237 (MSSDELVYMN…EQMNPFINFD (237 aa)) form an alpha N-terminal domain (alpha-NTD) region. The alpha C-terminal domain (alpha-CTD) stretch occupies residues 256–340 (FNENLYRSVD…PEEDQIKEGE (85 aa)).

The protein belongs to the RNA polymerase alpha chain family. In terms of assembly, homodimer. The RNAP catalytic core consists of 2 alpha, 1 beta, 1 beta' and 1 omega subunit. When a sigma factor is associated with the core the holoenzyme is formed, which can initiate transcription.

The catalysed reaction is RNA(n) + a ribonucleoside 5'-triphosphate = RNA(n+1) + diphosphate. Functionally, DNA-dependent RNA polymerase catalyzes the transcription of DNA into RNA using the four ribonucleoside triphosphates as substrates. The polypeptide is DNA-directed RNA polymerase subunit alpha (Desulforapulum autotrophicum (strain ATCC 43914 / DSM 3382 / VKM B-1955 / HRM2) (Desulfobacterium autotrophicum)).